Reading from the N-terminus, the 148-residue chain is MATRRILKELKELQRDPPVSCSAGPTGEDMFHWQATIMGPNESPYSGGVFLVNIHFPPDYPFKPPKVVFRTKVFHPNINSNGNICLDILKDQWSPALTISKVLLSICSLLTDPNPDDPLVPEIAHIYKTDKTKYEAMARSWTQKYALF.

Residues 1–147 (MATRRILKEL…ARSWTQKYAL (147 aa)) enclose the UBC core domain. Catalysis depends on Cys85, which acts as the Glycyl thioester intermediate.

It belongs to the ubiquitin-conjugating enzyme family.

The enzyme catalyses S-ubiquitinyl-[E1 ubiquitin-activating enzyme]-L-cysteine + [E2 ubiquitin-conjugating enzyme]-L-cysteine = [E1 ubiquitin-activating enzyme]-L-cysteine + S-ubiquitinyl-[E2 ubiquitin-conjugating enzyme]-L-cysteine.. Its pathway is protein modification; protein ubiquitination. Its function is as follows. Accepts the ubiquitin from the E1 complex and catalyzes its covalent attachment to other proteins. In Arabidopsis thaliana (Mouse-ear cress), this protein is Ubiquitin-conjugating enzyme E2 29 (UBC29).